The following is a 129-amino-acid chain: L-ectoine synthase (129 aa).

This sequence belongs to the ectoine synthase family.

The enzyme catalyses (2S)-4-acetamido-2-aminobutanoate = L-ectoine + H2O. It functions in the pathway amine and polyamine biosynthesis; ectoine biosynthesis; L-ectoine from L-aspartate 4-semialdehyde: step 3/3. Catalyzes the circularization of gamma-N-acetyl-alpha,gamma-diaminobutyric acid (ADABA) to ectoine (1,4,5,6-tetrahydro-2-methyl-4-pyrimidine carboxylic acid), which is an excellent osmoprotectant. The polypeptide is L-ectoine synthase (Mycobacterium sp. (strain KMS)).